The following is an 81-amino-acid chain: ATP synthase subunit c, chloroplastic (81 aa).

Transmembrane regions (helical) follow at residues 7–27 (AASVIAAGLAVGLASIGPGIG) and 57–77 (LAFMEALTIYGLVVALALLFA).

It belongs to the ATPase C chain family. As to quaternary structure, F-type ATPases have 2 components, F(1) - the catalytic core - and F(0) - the membrane proton channel. F(1) has five subunits: alpha(3), beta(3), gamma(1), delta(1), epsilon(1). F(0) has four main subunits: a(1), b(1), b'(1) and c(10-14). The alpha and beta chains form an alternating ring which encloses part of the gamma chain. F(1) is attached to F(0) by a central stalk formed by the gamma and epsilon chains, while a peripheral stalk is formed by the delta, b and b' chains.

It is found in the plastid. The protein localises to the chloroplast thylakoid membrane. Its function is as follows. F(1)F(0) ATP synthase produces ATP from ADP in the presence of a proton or sodium gradient. F-type ATPases consist of two structural domains, F(1) containing the extramembraneous catalytic core and F(0) containing the membrane proton channel, linked together by a central stalk and a peripheral stalk. During catalysis, ATP synthesis in the catalytic domain of F(1) is coupled via a rotary mechanism of the central stalk subunits to proton translocation. Key component of the F(0) channel; it plays a direct role in translocation across the membrane. A homomeric c-ring of between 10-14 subunits forms the central stalk rotor element with the F(1) delta and epsilon subunits. The sequence is that of ATP synthase subunit c, chloroplastic from Pelargonium hortorum (Common geranium).